A 249-amino-acid polypeptide reads, in one-letter code: 1-(5-phosphoribosyl)-5-[(5-phosphoribosylamino)methylideneamino] imidazole-4-carboxamide isomerase (249 aa).

Asp8 acts as the Proton acceptor in catalysis. The active-site Proton donor is Asp131.

Belongs to the HisA/HisF family.

The protein resides in the cytoplasm. It catalyses the reaction 1-(5-phospho-beta-D-ribosyl)-5-[(5-phospho-beta-D-ribosylamino)methylideneamino]imidazole-4-carboxamide = 5-[(5-phospho-1-deoxy-D-ribulos-1-ylimino)methylamino]-1-(5-phospho-beta-D-ribosyl)imidazole-4-carboxamide. The protein operates within amino-acid biosynthesis; L-histidine biosynthesis; L-histidine from 5-phospho-alpha-D-ribose 1-diphosphate: step 4/9. The protein is 1-(5-phosphoribosyl)-5-[(5-phosphoribosylamino)methylideneamino] imidazole-4-carboxamide isomerase of Nitrosomonas europaea (strain ATCC 19718 / CIP 103999 / KCTC 2705 / NBRC 14298).